The following is a 30-amino-acid chain: Thylakoid lumenal 13.3 kDa protein (30 aa).

It is found in the plastid. Its subcellular location is the chloroplast thylakoid lumen. The chain is Thylakoid lumenal 13.3 kDa protein from Spinacia oleracea (Spinach).